The primary structure comprises 215 residues: 3,4-dihydroxy-2-butanone 4-phosphate synthase (215 aa).

D-ribulose 5-phosphate contacts are provided by residues 38-39 (RE), D43, 151-155 (RRGHT), and E175. Residue E39 coordinates Mg(2+). H154 is a binding site for Mg(2+).

This sequence belongs to the DHBP synthase family. As to quaternary structure, homodimer. Requires Mg(2+) as cofactor. Mn(2+) is required as a cofactor.

It catalyses the reaction D-ribulose 5-phosphate = (2S)-2-hydroxy-3-oxobutyl phosphate + formate + H(+). It functions in the pathway cofactor biosynthesis; riboflavin biosynthesis; 2-hydroxy-3-oxobutyl phosphate from D-ribulose 5-phosphate: step 1/1. Catalyzes the conversion of D-ribulose 5-phosphate to formate and 3,4-dihydroxy-2-butanone 4-phosphate. This Haemophilus influenzae (strain 86-028NP) protein is 3,4-dihydroxy-2-butanone 4-phosphate synthase.